The sequence spans 60 residues: Small ribosomal subunit protein eS31 (60 aa).

Zn(2+)-binding residues include Cys27, Cys30, Cys45, and Cys48. The C4-type zinc-finger motif lies at 27–48; sequence CPRCGPGVFMAEHLNRYACGKC.

The protein belongs to the eukaryotic ribosomal protein eS31 family. Part of the 30S ribosomal subunit. It depends on Zn(2+) as a cofactor.

The sequence is that of Small ribosomal subunit protein eS31 from Methanocaldococcus jannaschii (strain ATCC 43067 / DSM 2661 / JAL-1 / JCM 10045 / NBRC 100440) (Methanococcus jannaschii).